A 1520-amino-acid chain; its full sequence is Accessory colonization factor AcfD (1520 aa).

The N-terminal stretch at Met-1 to Gly-16 is a signal peptide. The N-palmitoyl cysteine moiety is linked to residue Cys-17. Cys-17 carries the S-diacylglycerol cysteine lipid modification. The 304-residue stretch at Gly-1085 to Glu-1388 folds into the Peptidase M60 domain.

It localises to the cell membrane. The chain is Accessory colonization factor AcfD (acfD) from Vibrio cholerae serotype O1 (strain ATCC 39315 / El Tor Inaba N16961).